The following is a 223-amino-acid chain: MASKLLRAVILGPPGSGKGTVCERIAQNFGLQHLSSGHLLRENLKTNTEVGDVAKQYLEKGLLVPDHVITRLMMSELETRSAQHWLLDGFPRTLVQAEALDRICDVDLVISLNIPFETLKDRLSRRWIHPSSGRVYNLDFNPPQVLGVDDITGEPLVQQEDDKPEALAARLRRYKDAAKPVIELYKSRGVLHQFSGTETNRIWPYVYTLFSNKITPIQSKEAY.

15-20 (GSGKGT) is a binding site for a ribonucleoside 5'-triphosphate. The interval 35-64 (SSGHLLRENLKTNTEVGDVAKQYLEKGLLV) is NMP. AMP is bound by residues S36 and R41. At K60 the chain carries N6-succinyllysine. AMP contacts are provided by residues 62-64 (LLV), 89-92 (GFPR), and Q96. Positions 125 to 162 (RRWIHPSSGRVYNLDFNPPQVLGVDDITGEPLVQQEDD) are LID. Residues R126 and 135–136 (VY) each bind a ribonucleoside 5'-triphosphate. Residue R170 participates in AMP binding. Residue K175 is modified to N6-acetyllysine. N6-acetyllysine; alternate is present on residues K179 and K186. K179 and K186 each carry N6-succinyllysine; alternate. T199 contacts a ribonucleoside 5'-triphosphate.

Belongs to the adenylate kinase family. AK3 subfamily. In terms of assembly, monomer. Interacts with SLC25A5/ANT2. As to expression, expressed in the pyramidal cells in the hippocampus.

Its subcellular location is the mitochondrion matrix. The enzyme catalyses a ribonucleoside 5'-phosphate + ATP = a ribonucleoside 5'-diphosphate + ADP. The catalysed reaction is AMP + ATP = 2 ADP. It catalyses the reaction GTP + AMP = GDP + ADP. It carries out the reaction CMP + ATP = CDP + ADP. The enzyme catalyses GTP + CMP = CDP + GDP. The catalysed reaction is dAMP + ATP = dADP + ADP. It catalyses the reaction dCMP + ATP = dCDP + ADP. It carries out the reaction a 2'-deoxyribonucleoside 5'-diphosphate + ATP = a 2'-deoxyribonucleoside 5'-triphosphate + ADP. The enzyme catalyses a ribonucleoside 5'-diphosphate + ATP = a ribonucleoside 5'-triphosphate + ADP. The catalysed reaction is GDP + ATP = GTP + ADP. It catalyses the reaction CDP + GTP = CTP + GDP. It carries out the reaction CDP + ATP = CTP + ADP. The enzyme catalyses UDP + ATP = UTP + ADP. The catalysed reaction is GTP + UDP = UTP + GDP. It catalyses the reaction dADP + GTP = dATP + GDP. It carries out the reaction dCDP + GTP = dCTP + GDP. The enzyme catalyses dCDP + ATP = dCTP + ADP. The catalysed reaction is dGDP + ATP = dGTP + ADP. It catalyses the reaction dTDP + GTP = dTTP + GDP. It carries out the reaction dTDP + ATP = dTTP + ADP. Broad-specificity mitochondrial nucleoside phosphate kinase involved in cellular nucleotide homeostasis by catalyzing nucleoside-phosphate interconversions. Similar to other adenylate kinases, preferentially catalyzes the phosphorylation of the nucleoside monophosphate AMP with ATP as phosphate donor to produce ADP. Phosphorylates only AMP when using GTP as phosphate donor. In vitro, can also catalyze the phosphorylation of CMP, dAMP and dCMP and use GTP as an alternate phosphate donor. Moreover, exhibits a diphosphate kinase activity, producing ATP, CTP, GTP, UTP, TTP, dATP, dCTP and dGTP from the corresponding diphosphate substrates with either ATP or GTP as phosphate donors. Plays a role in controlling cellular ATP levels by regulating phosphorylation and activation of the energy sensor protein kinase AMPK. Plays a protective role in the cellular response to oxidative stress. The polypeptide is Adenylate kinase 4, mitochondrial (Rattus norvegicus (Rat)).